Consider the following 298-residue polypeptide: ADP/ATP translocase 3 (298 aa).

Position 1 is an N-acetylmethionine (Met-1). At 1–7 the chain is on the mitochondrial intermembrane side; the sequence is MTEQAIS. An N-acetylthreonine; in ADP/ATP translocase 3, N-terminally processed modification is found at Thr-2. The stretch at 6–98 is one Solcar 1 repeat; sequence ISFAKDFLAG…FAFKDKYKQI (93 aa). Residues 8–37 traverse the membrane as a helical segment; sequence FAKDFLAGGIAAAISKTAVAPIERVKLLLQ. Residues 38–74 lie on the Mitochondrial matrix side of the membrane; that stretch reads VQHASKQIAADKQYKGIVDCIVRIPKEQGVLSFWRGN. At Lys-52 the chain carries N6,N6,N6-trimethyllysine. Residues 75-99 form a helical membrane-spanning segment; sequence LANVIRYFPTQALNFAFKDKYKQIF. 2 residues coordinate ADP: Arg-80 and Lys-92. Topologically, residues 100-109 are mitochondrial intermembrane; it reads LGGVDKRTQF. Lys-105 carries the post-translational modification N6-acetyllysine. The chain crosses the membrane as a helical span at residues 110-130; that stretch reads WRYFAGNLASGGAAGATSLCF. Solcar repeat units lie at residues 111-201 and 212-297; these read RYFA…AKGM and VSWM…LKKV. The Mitochondrial matrix portion of the chain corresponds to 131–178; it reads VYPLDFARTRLAADVGKSGSEREFRGLGDCLVKITKSDGIRGLYQGFN. Residues 179–199 form a helical membrane-spanning segment; the sequence is VSVQGIIIYRAAYFGIYDTAK. At 200-210 the chain is on the mitochondrial intermembrane side; it reads GMLPDPKNTHI. The chain crosses the membrane as a helical span at residues 211-231; the sequence is VVSWMIAQTVTAVAGVVSYPF. The Mitochondrial matrix segment spans residues 232–273; it reads DTVRRRMMMQSGRKGADIMYKGTVDCWRKILKDEGGKAFFKG. Arg-235 serves as a coordination point for ADP. The segment at 235–240 is important for transport activity; it reads RRRMMM. Residues 235–240 carry the Nucleotide carrier signature motif motif; sequence RRRMMM. N6-acetyllysine is present on Lys-268. The helical transmembrane segment at 274 to 291 threads the bilayer; it reads AWSNVLRGMGGAFVLVLY. Residues 292–298 are Mitochondrial intermembrane-facing; sequence DELKKVI.

Belongs to the mitochondrial carrier (TC 2.A.29) family. In terms of assembly, monomer. Found in a complex with ARL2, ARL2BP and SLC25A6/ANT3. Trimethylated by ANTKMT at Lys-52.

The protein localises to the mitochondrion inner membrane. The protein resides in the membrane. The catalysed reaction is ADP(in) + ATP(out) = ADP(out) + ATP(in). It carries out the reaction H(+)(in) = H(+)(out). Its activity is regulated as follows. The matrix-open state (m-state) is inhibited by the membrane-permeable bongkrekic acid (BKA). The cytoplasmic-open state (c-state) is inhibited by the membrane-impermeable toxic inhibitor carboxyatractyloside (CATR). Proton transporter activity is inhibited by ADP:ATP antiporter activity. Functionally, ADP:ATP antiporter that mediates import of ADP into the mitochondrial matrix for ATP synthesis, and export of ATP out to fuel the cell. Cycles between the cytoplasmic-open state (c-state) and the matrix-open state (m-state): operates by the alternating access mechanism with a single substrate-binding site intermittently exposed to either the cytosolic (c-state) or matrix (m-state) side of the inner mitochondrial membrane. In addition to its ADP:ATP antiporter activity, also involved in mitochondrial uncoupling and mitochondrial permeability transition pore (mPTP) activity. Plays a role in mitochondrial uncoupling by acting as a proton transporter: proton transport uncouples the proton flows via the electron transport chain and ATP synthase to reduce the efficiency of ATP production and cause mitochondrial thermogenesis. Proton transporter activity is inhibited by ADP:ATP antiporter activity, suggesting that SLC25A6/ANT3 acts as a master regulator of mitochondrial energy output by maintaining a delicate balance between ATP production (ADP:ATP antiporter activity) and thermogenesis (proton transporter activity). Proton transporter activity requires free fatty acids as cofactor, but does not transport it. Also plays a key role in mPTP opening, a non-specific pore that enables free passage of the mitochondrial membranes to solutes of up to 1.5 kDa, and which contributes to cell death. It is however unclear if SLC25A6/ANT3 constitutes a pore-forming component of mPTP or regulates it. In Bos taurus (Bovine), this protein is ADP/ATP translocase 3.